A 278-amino-acid polypeptide reads, in one-letter code: Small ribosomal subunit protein uS2 (278 aa).

The tract at residues 235–278 (QRRKDHGEGGQQAAGGGRGQRDEINVYQGGRGGRGGGPRQQQAS) is disordered. 2 stretches are compositionally biased toward gly residues: residues 243–252 (GGQQAAGGGR) and 263–272 (GGRGGRGGGP).

The protein belongs to the universal ribosomal protein uS2 family.

The protein is Small ribosomal subunit protein uS2 of Sorangium cellulosum (strain So ce56) (Polyangium cellulosum (strain So ce56)).